A 628-amino-acid polypeptide reads, in one-letter code: Probable potassium transport system protein Kup (628 aa).

The next 12 membrane-spanning stretches (helical) occupy residues 15 to 35, 55 to 75, 104 to 124, 142 to 162, 173 to 193, 210 to 230, 252 to 272, 281 to 301, 342 to 362, 372 to 392, 400 to 420, and 426 to 446; these read LAIAAIGVVFGDIGTSPLYSL, VISLLFWAIVIVVGVKYVLFV, AGLLMMLGIFGACMFYGDAVI, PHLSHLVLPLTIVILILLFWI, LFGPIMVLWFVVLAALGLWHI, TFMAAHVLQAYVVLGSVVLVL, WYVLVMPSLVLNYFGQGALLM, PFFLLAPDWALLPLVVLSTIA, IYVPVVNWMLLFIILCIVIAF, YGIAVTATMVITTILACVVMV, LLVALIIGVFMTVDLGFFGAN, and EGGWLPLGIGALLFFLLMTWY.

Belongs to the HAK/KUP transporter (TC 2.A.72) family.

The protein localises to the cell inner membrane. The catalysed reaction is K(+)(in) + H(+)(in) = K(+)(out) + H(+)(out). Its function is as follows. Transport of potassium into the cell. Likely operates as a K(+):H(+) symporter. This chain is Probable potassium transport system protein Kup, found in Paraburkholderia xenovorans (strain LB400).